The following is a 419-amino-acid chain: Protein indeterminate-domain 14 (419 aa).

Residues 1–58 (MIDYERSNTTKNINTHHHNPPPSSSSSDLLPDGNGTAVTQKRKRRPAGTPDPEAEVVS) are disordered. C2H2-type zinc fingers lie at residues 70 to 92 (YVCE…RRRH), 112 to 142 (YVCP…RRKH), and 148 to 175 (WICE…TRGH). Zn(2+)-binding residues include Cys150, Cys153, His166, Cys170, Cys177, Cys179, His192, and Cys196. A CCHC-type 2; atypical zinc finger spans residues 175–198 (HSCDCGRVFSRVESFIEHQDTCTV). The tract at residues 185 to 197 (RVESFIEHQDTCT) is SHR-binding. Disordered regions lie at residues 200-259 (RSQP…PSTL) and 298-318 (SEVE…EEAR). Composition is skewed to low complexity over residues 213–230 (QHTT…NNEN) and 246–259 (RRQS…PSTL). Residues 313–349 (EREEARRETKRQIEIAELEFAEAKRIRQHARAELHKA) adopt a coiled-coil conformation.

In terms of assembly, homo- and heterodimer of IDD14alpha and IDD14beta. Expressed in cotyledons and the vasculature of reosette leaves. Weak expression in hypocotyls and floral organs, but not detected in roots and inflorescence stems.

It localises to the nucleus. Its function is as follows. Transcription factor regulating starch metabolism by binding directly to the promoter of QQS. The IDD14beta isoform attenuates the transcription factor activity by competitively forming heterodimers with reduced DNA-binding capacity. Regulates lateral organ morphogenesis and gravitropic responses. Has a redundant role with IDD16 in directing leaf and floral organ morphogenesis. Involved in the establishment of auxin gradients through the regulation of auxin biosynthesis and transport. In Arabidopsis thaliana (Mouse-ear cress), this protein is Protein indeterminate-domain 14.